Here is a 155-residue protein sequence, read N- to C-terminus: Protein FAM162B (155 aa).

Residues 95–114 form a helical membrane-spanning segment; sequence VKACYIMMGLTIFACLVMIV.

Belongs to the UPF0389 family.

Its subcellular location is the membrane. The sequence is that of Protein FAM162B (fam162b) from Danio rerio (Zebrafish).